A 344-amino-acid chain; its full sequence is tRNA N6-adenosine threonylcarbamoyltransferase (344 aa).

2 residues coordinate Fe cation: His113 and His117. Substrate contacts are provided by residues 135-139 (LVSGG), Asp169, Gly182, Asp186, and Asn278. Asp306 contacts Fe cation. Residues 325–344 (ESPISVGTDPSLSVETPQVF) form a disordered region. Over residues 326 to 344 (SPISVGTDPSLSVETPQVF) the composition is skewed to polar residues.

This sequence belongs to the KAE1 / TsaD family. Fe(2+) is required as a cofactor.

It is found in the cytoplasm. It catalyses the reaction L-threonylcarbamoyladenylate + adenosine(37) in tRNA = N(6)-L-threonylcarbamoyladenosine(37) in tRNA + AMP + H(+). In terms of biological role, required for the formation of a threonylcarbamoyl group on adenosine at position 37 (t(6)A37) in tRNAs that read codons beginning with adenine. Is involved in the transfer of the threonylcarbamoyl moiety of threonylcarbamoyl-AMP (TC-AMP) to the N6 group of A37, together with TsaE and TsaB. TsaD likely plays a direct catalytic role in this reaction. This Corynebacterium glutamicum (strain R) protein is tRNA N6-adenosine threonylcarbamoyltransferase.